A 683-amino-acid chain; its full sequence is Receptor-like serine/threonine-protein kinase At2g45590 (683 aa).

The segment at Met-1 to Asp-21 is disordered. At Met-1–Pro-30 the chain is on the extracellular side. The chain crosses the membrane as a helical span at residues Leu-31 to Ile-51. The Cytoplasmic segment spans residues Tyr-52 to Arg-683. The Protein kinase domain occupies Phe-92–Phe-664. ATP contacts are provided by residues Leu-98–Val-106 and Lys-121. Catalysis depends on Asp-223, which acts as the Proton acceptor. The segment at Glu-406–Pro-436 is disordered. The segment covering Asn-411 to Val-424 has biased composition (polar residues). Residues Ser-425–Pro-436 show a composition bias toward basic residues.

The protein belongs to the protein kinase superfamily. Ser/Thr protein kinase family.

Its subcellular location is the cell membrane. It catalyses the reaction L-seryl-[protein] + ATP = O-phospho-L-seryl-[protein] + ADP + H(+). The catalysed reaction is L-threonyl-[protein] + ATP = O-phospho-L-threonyl-[protein] + ADP + H(+). This Arabidopsis thaliana (Mouse-ear cress) protein is Receptor-like serine/threonine-protein kinase At2g45590.